A 115-amino-acid polypeptide reads, in one-letter code: Nucleoid-associated protein NATL1_00191 (115 aa).

The segment at 89–115 (STSTMKERMEDLTGGFKLNLPGMGEES) is disordered.

It belongs to the YbaB/EbfC family. In terms of assembly, homodimer.

It localises to the cytoplasm. The protein localises to the nucleoid. Functionally, binds to DNA and alters its conformation. May be involved in regulation of gene expression, nucleoid organization and DNA protection. The sequence is that of Nucleoid-associated protein NATL1_00191 from Prochlorococcus marinus (strain NATL1A).